A 151-amino-acid polypeptide reads, in one-letter code: MMAEEHTDLEAQIVKDIHFKEIDLVNRDPKNINEDIVKVDFEDVIAEPVGTYSFDGVWKVSYTTFTVSKYWCYRLLSTLLGVPLALLWGFLFACISFCHIWAVVPCIKSYLIEIQCISHIYSLCIRTFCNPLFAALGQVCSNIKVMLRKEV.

Topologically, residues 1–83 (MMAEEHTDLE…RLLSTLLGVP (83 aa)) are cytoplasmic. Lys38 participates in a covalent cross-link: Glycyl lysine isopeptide (Lys-Gly) (interchain with G-Cter in SUMO3). The segment at 64–114 (TFTVSKYWCYRLLSTLLGVPLALLWGFLFACISFCHIWAVVPCIKSYLIEI) is required for interaction with DAG1. An intramembrane region (helical) is located at residues 84-104 (LALLWGFLFACISFCHIWAVV). The Cytoplasmic portion of the chain corresponds to 105-151 (PCIKSYLIEIQCISHIYSLCIRTFCNPLFAALGQVCSNIKVMLRKEV).

This sequence belongs to the caveolin family. In terms of assembly, homooligomer. Interacts with DYSF. Interacts with DLG1 and KCNA5; forms a ternary complex. Interacts with DAG1 (via its C-terminal); the interaction prevents binding of DAG1 with DMD. Interacts with TRIM72. Interacts with MUSK; may regulate MUSK signaling. Interacts with POPDC1. Interacts with CAVIN1, CAVIN2 and CAVIN4. In terms of processing, sumoylation with SUMO3 by PIAS4 may reduce agonist-induced internalization and desensitization of adrenergic receptor ABRD2.

It is found in the golgi apparatus membrane. Its subcellular location is the cell membrane. The protein resides in the membrane. It localises to the caveola. The protein localises to the sarcolemma. Its function is as follows. May act as a scaffolding protein within caveolar membranes. Interacts directly with G-protein alpha subunits and can functionally regulate their activity. May also regulate voltage-gated potassium channels. Plays a role in the sarcolemma repair mechanism of both skeletal muscle and cardiomyocytes that permits rapid resealing of membranes disrupted by mechanical stress. Mediates the recruitment of CAVIN2 and CAVIN3 proteins to the caveolae. The polypeptide is Caveolin-3 (CAV3) (Bos taurus (Bovine)).